Here is a 211-residue protein sequence, read N- to C-terminus: LexA repressor (211 aa).

A DNA-binding region (H-T-H motif) is located at residues R31 to K51. Active-site for autocatalytic cleavage activity residues include S127 and K164.

This sequence belongs to the peptidase S24 family. As to quaternary structure, homodimer.

It carries out the reaction Hydrolysis of Ala-|-Gly bond in repressor LexA.. Represses a number of genes involved in the response to DNA damage (SOS response), including recA and lexA. In the presence of single-stranded DNA, RecA interacts with LexA causing an autocatalytic cleavage which disrupts the DNA-binding part of LexA, leading to derepression of the SOS regulon and eventually DNA repair. The protein is LexA repressor of Pasteurella multocida (strain Pm70).